We begin with the raw amino-acid sequence, 619 residues long: ATP-dependent DNA helicase RecQ (619 aa).

The Helicase ATP-binding domain maps to 37–205; sequence INAALNGQDA…LRHLNLKNLH (169 aa). Position 50–57 (50–57) interacts with ATP; it reads MATGNGKS. The short motif at 149–152 is the DEAH box element; that stretch reads DEAH. The Helicase C-terminal domain occupies 229–374; that stretch reads QLTRFVLAQK…QIEQHKLEAI (146 aa). Positions 383, 400, 403, and 406 each coordinate Zn(2+). Residues 535 to 615 enclose the HRDC domain; the sequence is ANYDKDLFAR…QEHKAILANA (81 aa).

This sequence belongs to the helicase family. RecQ subfamily. The cofactor is Mg(2+). Zn(2+) is required as a cofactor.

It catalyses the reaction Couples ATP hydrolysis with the unwinding of duplex DNA by translocating in the 3'-5' direction.. The enzyme catalyses ATP + H2O = ADP + phosphate + H(+). Functionally, an ATP-dependent DNA helicase which unwinds DNA in a 3'-5' direction. Plays a role in recombination. This Haemophilus influenzae (strain ATCC 51907 / DSM 11121 / KW20 / Rd) protein is ATP-dependent DNA helicase RecQ.